Reading from the N-terminus, the 555-residue chain is Serine/threonine-protein kinase Nek4 (555 aa).

Positions Tyr-4–Leu-258 constitute a Protein kinase domain. Residues Ile-10 to Ala-18 and Lys-33 each bind ATP. Asp-129 acts as the Proton acceptor in catalysis. Disordered stretches follow at residues Leu-288 to Gly-328, Gln-346 to Thr-372, and Asn-443 to Asp-477. Over residues Pro-304–Ala-320 the composition is skewed to polar residues.

It belongs to the protein kinase superfamily. NEK Ser/Thr protein kinase family. NIMA subfamily.

It carries out the reaction L-seryl-[protein] + ATP = O-phospho-L-seryl-[protein] + ADP + H(+). The catalysed reaction is L-threonyl-[protein] + ATP = O-phospho-L-threonyl-[protein] + ADP + H(+). In terms of biological role, may be involved in plant development processes. The sequence is that of Serine/threonine-protein kinase Nek4 (NEK4) from Arabidopsis thaliana (Mouse-ear cress).